A 335-amino-acid chain; its full sequence is Phosphate acyltransferase (335 aa).

Belongs to the PlsX family. Homodimer. Probably interacts with PlsY.

It localises to the cytoplasm. The enzyme catalyses a fatty acyl-[ACP] + phosphate = an acyl phosphate + holo-[ACP]. Its pathway is lipid metabolism; phospholipid metabolism. Functionally, catalyzes the reversible formation of acyl-phosphate (acyl-PO(4)) from acyl-[acyl-carrier-protein] (acyl-ACP). This enzyme utilizes acyl-ACP as fatty acyl donor, but not acyl-CoA. In Streptococcus equi subsp. zooepidemicus (strain H70), this protein is Phosphate acyltransferase.